The following is a 286-amino-acid chain: Shikimate dehydrogenase (NADP(+)) (286 aa).

Shikimate-binding positions include 22-24 (SFS) and threonine 69. Lysine 73 (proton acceptor) is an active-site residue. Glutamate 85 provides a ligand contact to NADP(+). Shikimate is bound by residues asparagine 94 and aspartate 109. NADP(+) is bound by residues 133-137 (GAGGA), 157-162 (NRTIDK), and leucine 231. Tyrosine 233 contacts shikimate. Glycine 254 lines the NADP(+) pocket.

It belongs to the shikimate dehydrogenase family. As to quaternary structure, homodimer.

The enzyme catalyses shikimate + NADP(+) = 3-dehydroshikimate + NADPH + H(+). It functions in the pathway metabolic intermediate biosynthesis; chorismate biosynthesis; chorismate from D-erythrose 4-phosphate and phosphoenolpyruvate: step 4/7. Its function is as follows. Involved in the biosynthesis of the chorismate, which leads to the biosynthesis of aromatic amino acids. Catalyzes the reversible NADPH linked reduction of 3-dehydroshikimate (DHSA) to yield shikimate (SA). The chain is Shikimate dehydrogenase (NADP(+)) from Alkaliphilus oremlandii (strain OhILAs) (Clostridium oremlandii (strain OhILAs)).